The primary structure comprises 224 residues: Non-structural protein V (224 aa).

Positions 54–65 (QKNIQHPTASHQ) are enriched in polar residues. Disordered regions lie at residues 54–94 (QKNI…TQIP) and 150–172 (TEFK…GHRR). 8 residues coordinate Zn(2+): H170, C189, C193, C205, C207, C210, C214, and C217.

It belongs to the paramyxoviruses V protein family. Interacts with host IFIH1/MDA5 and DHX58/LGP2. Forms with host DDB1, CUL4A, STAT1, STAT2 and STAT3 the mumps virus V-dependent complex (VDC).

The protein localises to the virion. It is found in the host cytoplasm. Its function is as follows. Plays an essential role in the inhibition of host immune response. Prevents the establishment of cellular antiviral state by blocking interferon-alpha/beta (IFN-alpha/beta) production and signaling pathway. Interacts with host IFIH1/MDA5 and DHX58/LGP2 to inhibit the transduction pathway involved in the activation of IFN-beta promoter, thus protecting the virus against cell antiviral state. Blocks the type I and II interferon signaling pathways by interacting with host STAT1, STAT2 and STAT3, and mediating their ubiquitination and subsequent proteasomal degradation. The chain is Non-structural protein V from Homo sapiens (Human).